We begin with the raw amino-acid sequence, 234 residues long: Orotidine 5'-phosphate decarboxylase (234 aa).

Residues aspartate 14, lysine 36, 63–72 (DMKLLDIDNT), threonine 118, arginine 179, glutamine 188, glycine 208, and arginine 209 each bind substrate. Residue lysine 65 is the Proton donor of the active site.

Belongs to the OMP decarboxylase family. Type 1 subfamily. As to quaternary structure, homodimer.

The catalysed reaction is orotidine 5'-phosphate + H(+) = UMP + CO2. Its pathway is pyrimidine metabolism; UMP biosynthesis via de novo pathway; UMP from orotate: step 2/2. Functionally, catalyzes the decarboxylation of orotidine 5'-monophosphate (OMP) to uridine 5'-monophosphate (UMP). The protein is Orotidine 5'-phosphate decarboxylase of Rhizobium meliloti (strain 1021) (Ensifer meliloti).